Consider the following 338-residue polypeptide: 1-aminocyclopropane-1-carboxylate deaminase (338 aa).

An N6-(pyridoxal phosphate)lysine modification is found at lysine 51. Catalysis depends on serine 78, which acts as the Nucleophile.

Belongs to the ACC deaminase/D-cysteine desulfhydrase family. In terms of assembly, homotrimer. It depends on pyridoxal 5'-phosphate as a cofactor.

It catalyses the reaction 1-aminocyclopropane-1-carboxylate + H2O = 2-oxobutanoate + NH4(+). In terms of biological role, catalyzes a cyclopropane ring-opening reaction, the irreversible conversion of 1-aminocyclopropane-1-carboxylate (ACC) to ammonia and alpha-ketobutyrate. Allows growth on ACC as a nitrogen source. The polypeptide is 1-aminocyclopropane-1-carboxylate deaminase (Burkholderia cenocepacia (strain HI2424)).